Consider the following 690-residue polypeptide: Elongation factor G (690 aa).

Residues 8–282 form the tr-type G domain; that stretch reads DKVRNIGIMA…AIVNYLPSPL (275 aa). GTP contacts are provided by residues 17-24, 81-85, and 135-138; these read AHIDAGKT, DTPGH, and NKMD.

This sequence belongs to the TRAFAC class translation factor GTPase superfamily. Classic translation factor GTPase family. EF-G/EF-2 subfamily.

Its subcellular location is the cytoplasm. In terms of biological role, catalyzes the GTP-dependent ribosomal translocation step during translation elongation. During this step, the ribosome changes from the pre-translocational (PRE) to the post-translocational (POST) state as the newly formed A-site-bound peptidyl-tRNA and P-site-bound deacylated tRNA move to the P and E sites, respectively. Catalyzes the coordinated movement of the two tRNA molecules, the mRNA and conformational changes in the ribosome. The polypeptide is Elongation factor G (Caldanaerobacter subterraneus subsp. tengcongensis (strain DSM 15242 / JCM 11007 / NBRC 100824 / MB4) (Thermoanaerobacter tengcongensis)).